Reading from the N-terminus, the 126-residue chain is Glycine cleavage system H protein (126 aa).

The Lipoyl-binding domain maps to 22–104; it reads KAYIGITSFA…YEQAWMIVVE (83 aa). At Lys-63 the chain carries N6-lipoyllysine.

Belongs to the GcvH family. As to quaternary structure, the glycine cleavage system is composed of four proteins: P, T, L and H. The cofactor is (R)-lipoate.

The glycine cleavage system catalyzes the degradation of glycine. The H protein shuttles the methylamine group of glycine from the P protein to the T protein. In terms of biological role, is also involved in protein lipoylation via its role as an octanoyl/lipoyl carrier protein intermediate. This is Glycine cleavage system H protein from Brevibacillus brevis (strain 47 / JCM 6285 / NBRC 100599).